Consider the following 528-residue polypeptide: Chaperonin GroEL, chloroplastic (528 aa).

Residues 29–32, 86–90, Gly415, 481–483, and Asp497 each bind ATP; these read TLGP, DGTTT, and NAA.

The protein belongs to the chaperonin (HSP60) family. In terms of assembly, forms a cylinder of 14 subunits composed of two heptameric rings stacked back-to-back. Interacts with the co-chaperonin GroES.

It localises to the plastid. It is found in the chloroplast. The enzyme catalyses ATP + H2O + a folded polypeptide = ADP + phosphate + an unfolded polypeptide.. Functionally, together with its co-chaperonin GroES, plays an essential role in assisting protein folding. The GroEL-GroES system forms a nano-cage that allows encapsulation of the non-native substrate proteins and provides a physical environment optimized to promote and accelerate protein folding. In Trieres chinensis (Marine centric diatom), this protein is Chaperonin GroEL, chloroplastic.